Here is a 332-residue protein sequence, read N- to C-terminus: MRPEPTNAPAALSRRFSVAPMMDWTDRHCRFFLRQLSRHTLLYTEMVTTGALLHGDRQRFLRYDECEHPLALQLGGSVPAELAACARLAEEAGYDEVNLNVGCPSDRVQHNMIGACLMGHPALVADCVKAMLDAVEIAVTVKHRIGINGRDSYAELCDFVGQVREAGCRSFTVHARIAILEGLSPKENREVPPLRYEVAAQLKKDFPDLEIVLNGGIKTLEACREHLQTFDGVMLGREAYHNPYLLAAVDSQLFGSEAPPLSRSEALLRLRPYIERHQAEGGAMHHVTRHILGLAQGFPGSRRFRQLLSVDVHKAADPLRVFDQALELLAGR.

Residues 20-22 (PMM) and Gln-73 contribute to the FMN site. The active-site Proton donor is Cys-103. FMN-binding positions include Lys-142, His-174, 214-216 (NGG), and 236-237 (GR).

Belongs to the Dus family. DusA subfamily. Requires FMN as cofactor.

The catalysed reaction is 5,6-dihydrouridine(20) in tRNA + NADP(+) = uridine(20) in tRNA + NADPH + H(+). The enzyme catalyses 5,6-dihydrouridine(20) in tRNA + NAD(+) = uridine(20) in tRNA + NADH + H(+). It catalyses the reaction 5,6-dihydrouridine(20a) in tRNA + NADP(+) = uridine(20a) in tRNA + NADPH + H(+). It carries out the reaction 5,6-dihydrouridine(20a) in tRNA + NAD(+) = uridine(20a) in tRNA + NADH + H(+). Functionally, catalyzes the synthesis of 5,6-dihydrouridine (D), a modified base found in the D-loop of most tRNAs, via the reduction of the C5-C6 double bond in target uridines. Specifically modifies U20 and U20a in tRNAs. This is tRNA-dihydrouridine(20/20a) synthase from Pseudomonas aeruginosa (strain ATCC 15692 / DSM 22644 / CIP 104116 / JCM 14847 / LMG 12228 / 1C / PRS 101 / PAO1).